The following is a 723-amino-acid chain: MPNRGAHFSISRRKDFLMDFSERVFCGHLTPDHTGRRVLLAGWVDAFRDHGGLLFIHLRDRNGIIQIVFSPEAASADVYRQAASLRAEYCVAVQGEVRKRLPGTENPHIETGDIEVFVSELTVLSESEALPFAISDKAMVAGASSAGADHVNEDLRMQYRYLDIRRPAMQKNLILRHRISQCVREFLDSRGFVEVETPVLTMSTPEGARDYLVPSRIHPRSFYALPQSPQLFKQLLMIGGMERYFQLARCFRDEDLRPNRQPEFTQLDIEASFIDEEFLYELIEELTVRMFAIGGIALSRPFPRMTYAEAMDTTGSDRPDLRFGLRMADVTGVFSRTSYSIFKQILQRGGSIKGINIKGQSEKLSKNVLQNEYAKEIAPSFGAKGMTWMRAEEGKLESNIVQFFSADELEALKRVFQVEDGDVLIMVADPSCAIVNSALGQLRLHLGNRLGLIPEGVFYPVWITEFPLFEPTDEGGVTSSHHPFTAPDRTDFDPGNIEELLSLRSRAYDLVVNGEELGGGSIRINDREVQRRIFAALGLTEEDVKNKFGFFLRAFDFAAPPHGGLALGMDRVVSMILQTPSIREVIAFPKNRSAACPLTGAPSEVKREQLAELGLLNLGDKDVLPGDAEKEDRIDHLSWVSRIGIAEGERPVMESILAQAEELAAQVGDLAGNEEPVRSVAPVANRVREGLEAVRLSFSGTGRLLKNAPAVKGDYFKVAGILD.

Glutamate 206 is a binding site for L-aspartate. The tract at residues 230–233 is aspartate; that stretch reads QLFK. Position 252 (arginine 252) interacts with L-aspartate. ATP contacts are provided by residues 252–254 and glutamine 261; that span reads RDE. Histidine 481 provides a ligand contact to L-aspartate. Residue glutamate 516 coordinates ATP. L-aspartate is bound at residue arginine 523. 568 to 571 serves as a coordination point for ATP; it reads GMDR.

The protein belongs to the class-II aminoacyl-tRNA synthetase family. Type 1 subfamily. As to quaternary structure, homodimer.

It localises to the cytoplasm. It catalyses the reaction tRNA(Asx) + L-aspartate + ATP = L-aspartyl-tRNA(Asx) + AMP + diphosphate. Aspartyl-tRNA synthetase with relaxed tRNA specificity since it is able to aspartylate not only its cognate tRNA(Asp) but also tRNA(Asn). Reaction proceeds in two steps: L-aspartate is first activated by ATP to form Asp-AMP and then transferred to the acceptor end of tRNA(Asp/Asn). The sequence is that of Aspartate--tRNA(Asp/Asn) ligase 1 from Syntrophus aciditrophicus (strain SB).